A 198-amino-acid chain; its full sequence is Putative undecaprenyl-diphosphatase YbjG (198 aa).

The Cytoplasmic segment spans residues 1–27 (MLENLNLSLFSLINATPDSAPWMISLA). The chain crosses the membrane as a helical span at residues 28-48 (IFIAKDLITVVPLLAVVLWLW). The Periplasmic portion of the chain corresponds to 49–57 (GLTAQRQLV). A helical transmembrane segment spans residues 58-78 (IKIAIALAVSLFVSWTMGHLF). Over 79-120 (PHDRPFVENIGYNFLHHAADDSFPSDHGTVIFTFALAFLCWH) the chain is Cytoplasmic. A helical transmembrane segment spans residues 121 to 143 (RLWSGSLLMVLAVVIAWSRVYLG). The Periplasmic segment spans residues 144 to 149 (VHWPLD). A helical membrane pass occupies residues 150-172 (MLGGLLAGMIGCLSAQIIWQAMG). Topologically, residues 173–198 (HKLYQRLQSWYRVCFALPIRKGWVRD) are cytoplasmic.

The protein belongs to the BcrC/YbjG family.

The protein localises to the cell inner membrane. It catalyses the reaction di-trans,octa-cis-undecaprenyl diphosphate + H2O = di-trans,octa-cis-undecaprenyl phosphate + phosphate + H(+). Overexpression leads to increased undecaprenyl diphosphatase activity and to increased resistance to bacitracin. May have a preferred substrate other than undecaprenyl diphosphate in vivo. The sequence is that of Putative undecaprenyl-diphosphatase YbjG (ybjG) from Escherichia coli (strain K12).